We begin with the raw amino-acid sequence, 372 residues long: Transcription factor YY2 (372 aa).

The mediates transcriptional activation stretch occupies residues 32–102 (MEDIPTESVQ…SDNQLGNDLE (71 aa)). Low complexity predominate over residues 126-136 (SAASTSTSTQS). Disordered regions lie at residues 126–172 (SAAS…WEQK) and 186–210 (TMWS…PPDY). Residues 137–146 (RSKKPSKKPS) show a composition bias toward basic residues. Polar residues-rich tracts occupy residues 154–165 (EANPAGSSSSLG) and 186–196 (TMWSPNDNNDQ). Positions 237–372 (EFTKVKPKRS…LTHVKTKNNP (136 aa)) are mediates transcriptional repression. 4 consecutive C2H2-type zinc fingers follow at residues 254 to 278 (VPCS…LHIH), 283 to 305 (HVCA…QLVH), 311 to 335 (FQCT…LRIH), and 341 to 365 (FVCP…ILTH).

Belongs to the YY transcription factor family. Expressed in kidney, liver, spleen and testis but not in colon.

The protein resides in the nucleus. Functions as a multifunctional transcription factor that may exhibit positive and negative control on a large number of genes. May antagonize YY1 and function in development and differentiation. The protein is Transcription factor YY2 (YY2) of Homo sapiens (Human).